We begin with the raw amino-acid sequence, 223 residues long: UPF0441 protein YgiB (223 aa).

The span at 178–195 (TVPKTAMAPKPATTTTVT) shows a compositional bias: low complexity. Residues 178 to 223 (TVPKTAMAPKPATTTTVTRGGFGESIAKQSTMQRSATGTSSRSMGG) are disordered. Residues 204 to 223 (AKQSTMQRSATGTSSRSMGG) are compositionally biased toward polar residues.

This sequence belongs to the UPF0441 family.

The polypeptide is UPF0441 protein YgiB (Shigella boydii serotype 4 (strain Sb227)).